A 342-amino-acid polypeptide reads, in one-letter code: GTPase Obg (342 aa).

The region spanning 1–159 (MKFIDEAKIY…RWIRLELKLL (159 aa)) is the Obg domain. Positions 160–332 (ADVGIIGLPN…LLYKIGEALK (173 aa)) constitute an OBG-type G domain. Residues 166 to 173 (GLPNVGKS), 191 to 195 (FTTLT), 214 to 217 (DIPG), 284 to 287 (NKTD), and 313 to 315 (SAA) each bind GTP. 2 residues coordinate Mg(2+): Ser-173 and Thr-193.

It belongs to the TRAFAC class OBG-HflX-like GTPase superfamily. OBG GTPase family. In terms of assembly, monomer. It depends on Mg(2+) as a cofactor.

It is found in the cytoplasm. In terms of biological role, an essential GTPase which binds GTP, GDP and possibly (p)ppGpp with moderate affinity, with high nucleotide exchange rates and a fairly low GTP hydrolysis rate. Plays a role in control of the cell cycle, stress response, ribosome biogenesis and in those bacteria that undergo differentiation, in morphogenesis control. The polypeptide is GTPase Obg (Syntrophus aciditrophicus (strain SB)).